The chain runs to 154 residues: Fimbrial protein (154 aa).

A propeptide spans 1–6 (MNAQKG) (leader sequence). F7 is modified (N-methylphenylalanine). Residues 7–29 (FTLIELMIVIAIIGILAAIALPA) traverse the membrane as a helical segment.

This sequence belongs to the N-Me-Phe pilin family. In terms of assembly, the pili are polar flexible filaments of about 5.4 nanometers diameter and 2.5 micrometers average length; they consist of only a single polypeptide chain arranged in a helical configuration of five subunits per turn in the assembled pilus.

The protein localises to the fimbrium. It localises to the membrane. The protein is Fimbrial protein (tfpA) of Moraxella nonliquefaciens.